A 112-amino-acid polypeptide reads, in one-letter code: Small ribosomal subunit protein bS6 (112 aa).

It belongs to the bacterial ribosomal protein bS6 family.

Its function is as follows. Binds together with bS18 to 16S ribosomal RNA. This chain is Small ribosomal subunit protein bS6, found in Hyphomonas neptunium (strain ATCC 15444).